The primary structure comprises 111 residues: Phosphoribosyl-ATP pyrophosphatase (111 aa).

Belongs to the PRA-PH family.

It is found in the cytoplasm. The catalysed reaction is 1-(5-phospho-beta-D-ribosyl)-ATP + H2O = 1-(5-phospho-beta-D-ribosyl)-5'-AMP + diphosphate + H(+). It functions in the pathway amino-acid biosynthesis; L-histidine biosynthesis; L-histidine from 5-phospho-alpha-D-ribose 1-diphosphate: step 2/9. The sequence is that of Phosphoribosyl-ATP pyrophosphatase from Alcanivorax borkumensis (strain ATCC 700651 / DSM 11573 / NCIMB 13689 / SK2).